Consider the following 77-residue polypeptide: UPF0291 protein Bsph_1689 (77 aa).

Belongs to the UPF0291 family.

Its subcellular location is the cytoplasm. The chain is UPF0291 protein Bsph_1689 from Lysinibacillus sphaericus (strain C3-41).